We begin with the raw amino-acid sequence, 152 residues long: Methylglyoxal synthase (152 aa).

Residues 6–152 enclose the MGS-like domain; sequence RTMATAKNIA…YQHYLNGRLK (147 aa). Residues histidine 19, lysine 23, 45-48, and 65-66 contribute to the substrate site; these read TGTT and SG. The active-site Proton donor/acceptor is the aspartate 71. Histidine 98 serves as a coordination point for substrate.

Belongs to the methylglyoxal synthase family.

The enzyme catalyses dihydroxyacetone phosphate = methylglyoxal + phosphate. In terms of biological role, catalyzes the formation of methylglyoxal from dihydroxyacetone phosphate. This is Methylglyoxal synthase from Photorhabdus laumondii subsp. laumondii (strain DSM 15139 / CIP 105565 / TT01) (Photorhabdus luminescens subsp. laumondii).